The primary structure comprises 566 residues: Mucin-21 (566 aa).

The first 24 residues, Met1 to Ser24, serve as a signal peptide directing secretion. Residue Asn25 is glycosylated (N-linked (GlcNAc...) asparagine). A disordered region spans residues Asn25 to Thr68. Topologically, residues Asn25 to Glu479 are extracellular. 28 tandem repeats follow at residues Ala31–Thr44, Ala45–Thr59, Ala60–Ile74, Val75–Thr89, Ala90–Ile104, Ala105–Thr119, Ala120–Thr134, Ala135–Thr149, Ala150–Thr164, Ala165–Thr179, Ala180–Thr194, Ala195–Thr209, Ala210–Thr224, Ala225–Thr239, Glu244–Thr254, Ala255–Thr269, Ala270–Thr284, Val285–Thr299, Ala300–Thr314, Ala315–Thr329, Ala330–Thr344, Ala345–Thr359, Ala360–Thr374, Ala375–Thr389, Ala390–Thr404, Ala405–Thr419, Ala420–Thr434, and Ala435–Thr449. The interval Ala31–Ala435 is 28 X 15 AA approximate tandem repeats. A disordered region spans residues Thr106–His456. The chain crosses the membrane as a helical span at residues Ile480–Phe500. The Cytoplasmic segment spans residues Cys501–Pro566. The segment at Gly521–Pro566 is cytoplasmic tail.

Post-translationally, O-glycosylated. Expressed in lung, large intestine, thymus, and testis. Expressed in normal and malignant bronchial epithelial cells.

It localises to the cell membrane. This chain is Mucin-21 (MUC21), found in Homo sapiens (Human).